The chain runs to 352 residues: Holliday junction branch migration complex subunit RuvB (352 aa).

Residues 4–191 (TDKFSAPDRV…FGIVARLEFY (188 aa)) are large ATPase domain (RuvB-L). ATP-binding positions include Leu30, Arg31, Gly72, Lys75, Thr76, Thr77, 138–140 (EDY), Arg181, Tyr191, and Arg228. Thr76 contacts Mg(2+). The interval 192–262 (TAEELARIVT…IADAALAMLD (71 aa)) is small ATPAse domain (RuvB-S). The head domain (RuvB-H) stretch occupies residues 265-352 (RVGFDLMDRK…GDSGDLIDGE (88 aa)). DNA-binding residues include Arg301, Arg320, and Arg325.

The protein belongs to the RuvB family. As to quaternary structure, homohexamer. Forms an RuvA(8)-RuvB(12)-Holliday junction (HJ) complex. HJ DNA is sandwiched between 2 RuvA tetramers; dsDNA enters through RuvA and exits via RuvB. An RuvB hexamer assembles on each DNA strand where it exits the tetramer. Each RuvB hexamer is contacted by two RuvA subunits (via domain III) on 2 adjacent RuvB subunits; this complex drives branch migration. In the full resolvosome a probable DNA-RuvA(4)-RuvB(12)-RuvC(2) complex forms which resolves the HJ.

Its subcellular location is the cytoplasm. The enzyme catalyses ATP + H2O = ADP + phosphate + H(+). Its function is as follows. The RuvA-RuvB-RuvC complex processes Holliday junction (HJ) DNA during genetic recombination and DNA repair, while the RuvA-RuvB complex plays an important role in the rescue of blocked DNA replication forks via replication fork reversal (RFR). RuvA specifically binds to HJ cruciform DNA, conferring on it an open structure. The RuvB hexamer acts as an ATP-dependent pump, pulling dsDNA into and through the RuvAB complex. RuvB forms 2 homohexamers on either side of HJ DNA bound by 1 or 2 RuvA tetramers; 4 subunits per hexamer contact DNA at a time. Coordinated motions by a converter formed by DNA-disengaged RuvB subunits stimulates ATP hydrolysis and nucleotide exchange. Immobilization of the converter enables RuvB to convert the ATP-contained energy into a lever motion, pulling 2 nucleotides of DNA out of the RuvA tetramer per ATP hydrolyzed, thus driving DNA branch migration. The RuvB motors rotate together with the DNA substrate, which together with the progressing nucleotide cycle form the mechanistic basis for DNA recombination by continuous HJ branch migration. Branch migration allows RuvC to scan DNA until it finds its consensus sequence, where it cleaves and resolves cruciform DNA. The protein is Holliday junction branch migration complex subunit RuvB of Cupriavidus pinatubonensis (strain JMP 134 / LMG 1197) (Cupriavidus necator (strain JMP 134)).